Here is a 139-residue protein sequence, read N- to C-terminus: Ribulose bisphosphate carboxylase small subunit (139 aa).

This sequence belongs to the RuBisCO small chain family. In terms of assembly, heterohexadecamer of 8 large and 8 small subunits.

It is found in the plastid. The protein resides in the chloroplast. Its function is as follows. RuBisCO catalyzes two reactions: the carboxylation of D-ribulose 1,5-bisphosphate, the primary event in carbon dioxide fixation, as well as the oxidative fragmentation of the pentose substrate in the photorespiration process. Both reactions occur simultaneously and in competition at the same active site. Although the small subunit is not catalytic it is essential for maximal activity. This Ectocarpus siliculosus (Brown alga) protein is Ribulose bisphosphate carboxylase small subunit.